Reading from the N-terminus, the 198-residue chain is Nucleoid occlusion factor SlmA (198 aa).

An HTH tetR-type domain is found at 10–70; that stretch reads NRREEILQSL…SLIEFIEDSL (61 aa). Positions 33 to 52 form a DNA-binding region, H-T-H motif; sequence TTAKLAASVGVSEAALYRHF. Residues 117-144 adopt a coiled-coil conformation; the sequence is EQDRLQGRINQLFERIEAQLRQVLREKR.

It belongs to the nucleoid occlusion factor SlmA family. In terms of assembly, homodimer. Interacts with FtsZ.

It localises to the cytoplasm. The protein resides in the nucleoid. Required for nucleoid occlusion (NO) phenomenon, which prevents Z-ring formation and cell division over the nucleoid. Acts as a DNA-associated cell division inhibitor that binds simultaneously chromosomal DNA and FtsZ, and disrupts the assembly of FtsZ polymers. SlmA-DNA-binding sequences (SBS) are dispersed on non-Ter regions of the chromosome, preventing FtsZ polymerization at these regions. In Salmonella dublin (strain CT_02021853), this protein is Nucleoid occlusion factor SlmA.